A 325-amino-acid chain; its full sequence is MDSELKEEIPVHEEFILCGGAETQVLKCGPWTDLFNDQSVKRPKLLIFIIPGNPGFSAFYVPFAKALYSLTNRCFPVWTISHAGHALAPKDKKILTTSEDSNAQEIKDIYGLNGQIEHKLAFLRTHVPKDMKLVLIGHSVGSYFTLQMLKRVPELPVIRAFLLFPTIERMSESPNGRIATPLLCWSRYVLYVTGYLLLKPCPEKIKSLLIRRGLQVMNLENEFSPLNILEPFCLANAAHLGGQEMMEVVKRDDETIREHLCKLTFYYGTIDPWCPKEYYEDIKKDFPEGDIRLCEKNIPHAFIIHFNQEMADMIADSLKDDLSKM.

Residue S139 is the Nucleophile of the active site. Residues D271 and H300 each act as charge relay system in the active site.

Belongs to the AB hydrolase superfamily. LDAH family.

The protein localises to the lipid droplet. It localises to the endoplasmic reticulum. It catalyses the reaction a cholesterol ester + H2O = cholesterol + a fatty acid + H(+). Probable serine lipid hydrolase associated with lipid droplets. Has low cholesterol esterase activity. Appears to lack triglyceride lipase activity. Involved in cholesterol and triglyceride homeostasis; stimulates cellular triglyceride accumulation and cellular cholesterol release. Acts antagonistically with PNPLA2/ATGL in regulation of cellular lipid stores. May regulate triglyceride accumulation indirectly through stimulation of PNPLA2/ATGL ubiquitination and proteasomal degradation. Promotes microtubule-dependent lipid droplet fusion. Highly expressed in macrophage-rich areas in atherosclerotic lesions, suggesting that it could promote cholesterol ester turnover in macrophages. This Pongo abelii (Sumatran orangutan) protein is Lipid droplet-associated hydrolase.